The chain runs to 148 residues: Transcriptional repressor NrdR (148 aa).

Residues 3–32 fold into a zinc finger; it reads CPKCSSEESKVVDSRQAEDAIRRRRVCESC. The ATP-cone domain occupies 47-137; the sequence is LLVIKKDDKR…VYRSFKDVSE (91 aa).

The protein belongs to the NrdR family. Zn(2+) serves as cofactor.

In terms of biological role, negatively regulates transcription of bacterial ribonucleotide reductase nrd genes and operons by binding to NrdR-boxes. This is Transcriptional repressor NrdR from Lactococcus lactis subsp. lactis (strain IL1403) (Streptococcus lactis).